Here is a 374-residue protein sequence, read N- to C-terminus: Cell division cycle-associated protein 7 (374 aa).

Disordered regions lie at residues 53 to 110 (ANRE…EDES) and 138 to 208 (SFPG…EEDK). Ser142 is modified (phosphoserine). Residues 146-170 (RRSLPGPSSRPKTPRRRTFPGVACR) form an interaction with MYC region. The Nuclear localization signal signature appears at 160-176 (RRRTFPGVACRRNPERR). Thr163 is modified (phosphothreonine). Ser190 bears the Phosphoserine mark. Thr196 carries the post-translational modification Phosphothreonine. Positions 196 to 207 (TEEEEEEEEEED) are enriched in acidic residues. Lys208 participates in a covalent cross-link: Glycyl lysine isopeptide (Lys-Gly) (interchain with G-Cter in SUMO2). Ser217 is subject to Phosphoserine. Residues 250-374 (EEELENICNN…SLKQEFEMQG (125 aa)) are mediates transcriptional activity.

As to quaternary structure, interacts with MYC (via C-terminus), YWHAE and YWHAZ. In terms of processing, phosphorylation at Thr-163 promotes interaction with YWHAE and YWHAZ, dissociation from MYC and sequestration in the cytoplasm.

The protein resides in the nucleus. Its subcellular location is the cytoplasm. Participates in MYC-mediated cell transformation and apoptosis; induces anchorage-independent growth and clonogenicity in lymphoblastoid cells. Insufficient to induce tumorigenicity when overexpressed but contributes to MYC-mediated tumorigenesis. May play a role as transcriptional regulator. The protein is Cell division cycle-associated protein 7 (CDCA7) of Bos taurus (Bovine).